The chain runs to 105 residues: Cell division protein FtsB (105 aa).

Over 1–3 (MRI) the chain is Cytoplasmic. A helical transmembrane segment spans residues 4-21 (VIYSMLVLLIAIQYPLWL). The Periplasmic portion of the chain corresponds to 22–105 (GKGGWLKVYE…DTAKASTVKQ (84 aa)). The stretch at 32–60 (MEKQVELQEAKNSLLALRNAKLEGDVKDL) forms a coiled coil.

This sequence belongs to the FtsB family. In terms of assembly, part of a complex composed of FtsB, FtsL and FtsQ.

It localises to the cell inner membrane. Functionally, essential cell division protein. May link together the upstream cell division proteins, which are predominantly cytoplasmic, with the downstream cell division proteins, which are predominantly periplasmic. The polypeptide is Cell division protein FtsB (Polynucleobacter asymbioticus (strain DSM 18221 / CIP 109841 / QLW-P1DMWA-1) (Polynucleobacter necessarius subsp. asymbioticus)).